The following is a 281-amino-acid chain: Acyl-[acyl-carrier-protein]--UDP-N-acetylglucosamine O-acyltransferase (281 aa).

Belongs to the transferase hexapeptide repeat family. LpxA subfamily. Homotrimer.

It localises to the cytoplasm. The enzyme catalyses a (3R)-hydroxyacyl-[ACP] + UDP-N-acetyl-alpha-D-glucosamine = a UDP-3-O-[(3R)-3-hydroxyacyl]-N-acetyl-alpha-D-glucosamine + holo-[ACP]. It participates in glycolipid biosynthesis; lipid IV(A) biosynthesis; lipid IV(A) from (3R)-3-hydroxytetradecanoyl-[acyl-carrier-protein] and UDP-N-acetyl-alpha-D-glucosamine: step 1/6. In terms of biological role, involved in the biosynthesis of lipid A, a phosphorylated glycolipid that anchors the lipopolysaccharide to the outer membrane of the cell. The polypeptide is Acyl-[acyl-carrier-protein]--UDP-N-acetylglucosamine O-acyltransferase (Rickettsia bellii (strain OSU 85-389)).